The sequence spans 256 residues: Thiazole synthase (256 aa).

Catalysis depends on lysine 97, which acts as the Schiff-base intermediate with DXP. Residues glycine 158, 184 to 185, and 206 to 207 contribute to the 1-deoxy-D-xylulose 5-phosphate site; these read AG and NT.

This sequence belongs to the ThiG family. As to quaternary structure, homotetramer. Forms heterodimers with either ThiH or ThiS.

It localises to the cytoplasm. It carries out the reaction [ThiS sulfur-carrier protein]-C-terminal-Gly-aminoethanethioate + 2-iminoacetate + 1-deoxy-D-xylulose 5-phosphate = [ThiS sulfur-carrier protein]-C-terminal Gly-Gly + 2-[(2R,5Z)-2-carboxy-4-methylthiazol-5(2H)-ylidene]ethyl phosphate + 2 H2O + H(+). The protein operates within cofactor biosynthesis; thiamine diphosphate biosynthesis. Functionally, catalyzes the rearrangement of 1-deoxy-D-xylulose 5-phosphate (DXP) to produce the thiazole phosphate moiety of thiamine. Sulfur is provided by the thiocarboxylate moiety of the carrier protein ThiS. In vitro, sulfur can be provided by H(2)S. The protein is Thiazole synthase of Pelotomaculum thermopropionicum (strain DSM 13744 / JCM 10971 / SI).